An 88-amino-acid chain; its full sequence is Small ribosomal subunit protein bS20 (88 aa).

The disordered stretch occupies residues 1 to 33 (MANTSSAKKATRKIARRTAVNKSRRTQMRGSVR).

Belongs to the bacterial ribosomal protein bS20 family.

In terms of biological role, binds directly to 16S ribosomal RNA. The sequence is that of Small ribosomal subunit protein bS20 from Rhodopseudomonas palustris (strain BisB5).